The following is a 2228-amino-acid chain: Genome polyprotein (2228 aa).

A disordered region spans residues 55 to 76; it reads TAEVGSHQPEPLKTSVDKPGSK. 2 short sequence motifs ((L)YPX(n)L motif) span residues 167–171 and 200–205; these read YPHGL and YPVWEL. An involved in P1-2A pentamerization region spans residues 766 to 836; sequence MMDRIALGDL…PRKIKGVFSQ (71 aa). The chain crosses the membrane as a helical span at residues 1011–1031; it reads TVEIINTVLCFVKSGILLYVI. The segment at 1043–1070 is membrane-penetrating ability; it reads IGLLRVMNYADIGCSVISCGKVFSKMLE. The stretch at 1127 to 1153 forms a coiled coil; that stretch reads NKKDVLNILKDHQQKIERAIEEADNFC. The 163-residue stretch at 1204–1366 folds into the SF3 helicase domain; the sequence is HQKLKNLGSI…SFFKNPHNDM (163 aa). 1230 to 1237 provides a ligand contact to ATP; it reads GKRGGGKS. The helical transmembrane segment at 1462–1482 threads the bilayer; it reads WVAVGAAVGVLGVLVGGWYVY. Tyrosine 1499 is modified (O-(5'-phospho-RNA)-tyrosine). Residues 1514 to 1728 form the Peptidase C3 domain; sequence DPVESQSTLE…VAKLVTQEMF (215 aa). Catalysis depends on for protease 3C activity residues histidine 1563, aspartate 1603, and cysteine 1691. Residues 1977 to 2098 enclose the RdRp catalytic domain; it reads DVGLDLDFSA…VFSRQVQIDN (122 aa).

Belongs to the picornaviridae polyprotein family. Homodimer. Homomultimer; probably interacts with membranes in a multimeric form. Seems to assemble into amyloid-like fibers. In terms of assembly, homodimer. Monomer. Interacts with protein 3CD. As to quaternary structure, interacts with host ACBD3. Interacts with protein 3AB. In terms of assembly, interacts with human MAVS. As to quaternary structure, homodimer; disulfide-linked. Homopentamer. Homooligomer. In terms of assembly, interacts with capsid protein VP2. Interacts with capsid protein VP3. As to quaternary structure, interacts with capsid protein VP1. Interacts with capsid protein VP3. Interacts with capsid protein VP1. Interacts with capsid protein VP2. Specific enzymatic cleavages by viral protease in vivo yield a variety of precursors and mature proteins. Polyprotein processing intermediates are produced, such as P1-2A which is a functional precursor of the structural proteins, VP0 which is a VP4-VP2 precursor, VP1-2A precursor, 3ABC precursor which is a stable and catalytically active precursor of 3A, 3B and 3C proteins, 3AB and 3CD precursors. The assembly signal 2A is removed from VP1-2A by a host protease, possibly host Cathepsin L. This cleavage occurs over a region of 3 amino-acids probably generating VP1 proteins with heterogeneous C-termini. In terms of processing, during virion maturation, immature virions are rendered infectious following cleavage of VP0 into VP4 and VP2. This maturation seems to be an autocatalytic event triggered by the presence of RNA in the capsid and is followed by a conformational change of the particle. Post-translationally, the assembly signal 2A is removed from VP1-2A by a host protease, possibly host Cathepsin L in naked virions. This cleavage does not occur in enveloped virions. This cleavage occurs over a region of 3 amino-acids probably generating VP1 proteins with heterogeneous C-termini. VPg is uridylylated prior to priming replication into VPg-pUpU. In terms of processing, unlike other picornaviruses, does not seem to be myristoylated.

The protein localises to the virion. It is found in the host endosome. The protein resides in the host multivesicular body. Its subcellular location is the host membrane. It localises to the host mitochondrion outer membrane. The protein localises to the host cytoplasm. It is found in the host cytoplasmic vesicle membrane. The enzyme catalyses RNA(n) + a ribonucleoside 5'-triphosphate = RNA(n+1) + diphosphate. It carries out the reaction a ribonucleoside 5'-triphosphate + H2O = a ribonucleoside 5'-diphosphate + phosphate + H(+). It catalyses the reaction Selective cleavage of Gln-|-Gly bond in the poliovirus polyprotein. In other picornavirus reactions Glu may be substituted for Gln, and Ser or Thr for Gly.. Capsid proteins VP1, VP2, and VP3 form a closed capsid enclosing the viral positive strand RNA genome. All these proteins contain a beta-sheet structure called beta-barrel jelly roll. Together they form an icosahedral capsid (T=3) composed of 60 copies of each VP1, VP2, and VP3, with a diameter of approximately 300 Angstroms. VP1 is situated at the 12 fivefold axes, whereas VP2 and VP3 are located at the quasi-sixfold axes. The naked capsid interacts with the host receptor HAVCR1 to provide virion attachment to and probably entry into the target cell. Functionally, VP0 precursor is a component of the immature procapsids. Its function is as follows. Plays a role in the assembly of the 12 pentamers into an icosahedral structure. Has not been detected in mature virions, supposedly owing to its small size. In terms of biological role, precursor component of immature procapsids that corresponds to an extended form of the structural protein VP1. After maturation, possibly by the host Cathepsin L, the assembly signal 2A is cleaved to give rise to the mature VP1 protein. Functions as a viroporin. Affects membrane integrity and causes an increase in membrane permeability. Involved in host intracellular membrane rearrangements probably to give rise to the viral factories. Does not disrupt calcium homeostasis or glycoprotein trafficking. Antagonizes the innate immune response of the host by suppressing IFN-beta synthesis, which it achieves by interfering with the RIG-I/IFIH1 pathway. Functionally, affects membrane integrity and causes an increase in membrane permeability. Its function is as follows. Associates with and induces structural rearrangements of intracellular membranes. Displays RNA-binding activity. In terms of biological role, the precursor 3ABC is targeted to the mitochondrial membrane where protease 3C activity cleaves and inhibits the host antiviral protein MAVS, thereby disrupting activation of IRF3 through the IFIH1/MDA5 pathway. In vivo, the protease activity of 3ABC precursor is more efficient in cleaving the 2BC precursor than that of protein 3C. The 3ABC precursor may therefore play a role in the proteolytic processing of the polyprotein. Possible viroporin. Interacts with the 3CD precursor and with RNA structures found at both the 5'- and 3'-termini of the viral genome. Since the 3AB precursor contains the hydrophobic domain 3A, it probably anchors the whole viral replicase complex to intracellular membranes on which viral RNA synthesis occurs. Functionally, may serve as membrane anchor to the 3AB and 3ABC precursors via its hydrophobic domain. May interact with RNA. Its function is as follows. Acts as a primer for viral RNA replication and remains covalently bound to viral genomic RNA. VPg is uridylylated prior to priming replication into VPg-pUpU. The VPg-pUpU is then used as primer on the genomic RNA poly(A) by the RNA-dependent RNA polymerase to replicate the viral genome. In terms of biological role, cysteine protease that generates mature viral proteins from the precursor polyprotein. In addition to its proteolytic activity, it binds to viral RNA, and thus influences viral genome replication. RNA and substrate bind cooperatively to the protease. Cleaves IKBKG/NEMO to impair innate immune signaling. Cleaves host PABPC1 which may participate in the switch of viral translation to RNA synthesis. Interacts with the 3AB precursor and with RNA structures found at both the 5'- and 3'-termini of the viral genome. Disrupts TLR3 signaling by degrading the host adapter protein TICAM1/TRIF. Functionally, RNA-directed RNA polymerase 3D-POL replicates genomic and antigenomic RNA by recognizing replications specific signals. In Human hepatitis A virus genotype IIIA (isolate NOR-21) (HHAV), this protein is Genome polyprotein.